The following is a 37-amino-acid chain: Large ribosomal subunit protein bL36c (37 aa).

Belongs to the bacterial ribosomal protein bL36 family.

The protein resides in the plastid. It is found in the chloroplast. The chain is Large ribosomal subunit protein bL36c from Mesembryanthemum crystallinum (Common ice plant).